The following is a 981-amino-acid chain: Alpha-mannosidase (981 aa).

Zn(2+) is bound by residues H23, D25, and D145. The active-site Nucleophile is D145. N312 carries an N-linked (GlcNAc...) asparagine glycan. H386 is a Zn(2+) binding site. 3 disulfides stabilise this stretch: C422–C432, C442–C450, and C800–C807. N-linked (GlcNAc...) asparagine glycosylation occurs at N446. The interval 938–957 (KKMKWSVEGDNEQEPQAVRG) is disordered.

The protein belongs to the glycosyl hydrolase 38 family. As to quaternary structure, dimer of dimers of heavy and light subunits. It depends on Zn(2+) as a cofactor. In terms of processing, produced as a precursor which is then proteolytically cleaved into a 66kD heavy subunit and a 44kD light subunit. Cleavage probably occurs in protein bodies/protein storage vacuoles.

The protein resides in the protein storage vacuole. The catalysed reaction is Hydrolysis of terminal, non-reducing alpha-D-mannose residues in alpha-D-mannosides.. With respect to regulation, inhibited by 2,3,4,6-tetra-O-acetyl-5-fluoro-beta-L-gulopyranosyl fluoride which acts as a slow substrate, doubling as a competitive inhibitor as it forms a high steady state concentration of glycosyl-enzyme intermediate that blocks the active site. Inhibited by 2,3,4,6-tetra-O-acetyl-5-fluoro-alpha-D-mannopyranosyl fluoride which also acts as a slow substrate but no intermediates accumulate. Inhibited by EDTA. Inhibited by metal ion Cu(2+). Inhibited by metal ions Fe(2+), Cd(2+) and Co(2+). Inhibited by metal ions Ag(+) and Hg(2+). Competitively inhibited by mannono-1-4-lactone and mannono-1-5-lactone. Inhibited by swainsonine but not by 1-desoxymannojirimycin. Inhibited by pyrrolidine-3,4-diol derivatives. In terms of biological role, liberates mannose from p-nitrophenyl-alpha-D-mannoside. Liberates mannose from further alpha-D-mannosides including methyl-, benzyl-alpha-D-mannoside, 1-6-linked di-, tri- and tetrasaccharides of alpha-D-mannose and mannosyl-rhamnose. Liberates mannose from various glycoproteins like ovalbumin and ovomucoid. Does not hydrolyze beta-D-mannosides. Has glycosyltransferase activity, forming disaccharides from mannose and lyxose but not from glucose, galactose, ribose, xylose or arabinose. In Canavalia ensiformis (Jack bean), this protein is Alpha-mannosidase.